We begin with the raw amino-acid sequence, 448 residues long: Enolase (448 aa).

(2R)-2-phosphoglycerate is bound at residue Q164. Catalysis depends on E206, which acts as the Proton donor. Mg(2+) contacts are provided by D243, E289, and D316. Positions 341, 370, 371, and 392 each coordinate (2R)-2-phosphoglycerate. Residue K341 is the Proton acceptor of the active site.

This sequence belongs to the enolase family. The cofactor is Mg(2+).

It is found in the cytoplasm. The protein localises to the secreted. The protein resides in the cell surface. It carries out the reaction (2R)-2-phosphoglycerate = phosphoenolpyruvate + H2O. The protein operates within carbohydrate degradation; glycolysis; pyruvate from D-glyceraldehyde 3-phosphate: step 4/5. In terms of biological role, catalyzes the reversible conversion of 2-phosphoglycerate (2-PG) into phosphoenolpyruvate (PEP). It is essential for the degradation of carbohydrates via glycolysis. The protein is Enolase of Oenococcus oeni (strain ATCC BAA-331 / PSU-1).